A 490-amino-acid chain; its full sequence is Angiopoietin-related protein 1 (490 aa).

The first 22 residues, 1–22 (MKAFVWTLSVLLFLLGSGHCKG), serve as a signal peptide directing secretion. Positions 79–167 (ITRMDLENLK…LNVTTEMLKM (89 aa)) form a coiled coil. Asn159 and Asn187 each carry an N-linked (GlcNAc...) asparagine glycan. A Fibrinogen C-terminal domain is found at 270-490 (FINEGPFKDC…AVQMMIKPID (221 aa)). Disulfide bonds link Cys279/Cys308 and Cys431/Cys444.

The protein localises to the secreted. This Mus musculus (Mouse) protein is Angiopoietin-related protein 1 (Angptl1).